Here is a 391-residue protein sequence, read N- to C-terminus: Lysophosphatidylinositol acyltransferase 10 (391 aa).

Helical transmembrane passes span 10–30, 52–72, 97–119, 323–343, and 347–367; these read LLGWFFGLCILFSALFGNYII, AISYWMTIPMGLLEFLMGVRI, WMYMWCALYQINPWLITSNKISL, LTSLMFWTLVISFCSYHIFFV, and QLGFLYFFVISFYLSWRYGGI.

Belongs to the 1-acyl-sn-glycerol-3-phosphate acyltransferase family. Expressed in seam cells, vulval epithelial cells and the major epithelial syncytium hyp7, and in several head neurons including AIY interneurons.

The protein resides in the endoplasmic reticulum membrane. It carries out the reaction a 2-acyl-sn-glycero-3-phospho-D-myo-inositol + an acyl-CoA = a 1,2-diacyl-sn-glycero-3-phospho-(1D-myo-inositol) + CoA. The catalysed reaction is a 2-acyl-sn-glycero-3-phospho-D-myo-inositol + octadecanoyl-CoA = 1-octadecanoyl-2-acyl-sn-glycero-3-phospho-1D-myo-inositol + CoA. It functions in the pathway phospholipid metabolism; phosphatidylinositol metabolism. In terms of biological role, acyltransferase required for the fatty acid remodeling of phosphatidylinositol (1,2-diacyl-sn-glycero-3-phosphoinositol or PI). Mediates the conversion of lysophosphatidylinositol (2-acylglycerophosphatidylinositol or LPI) into PI (LPIAT activity). Has preference for saturated and mono-unsaturated fatty acids as acyl donors and sn-2-acyl lysoPI (2-acyl-sn-glycero-3-phospho-D-myo-inositol) as acyl acceptor. Contributes to the asymmetric cell division of epithelial cells. Asymmetric cell division is the fundamental mechanism by which multicellular organisms generate cell diversity. The polypeptide is Lysophosphatidylinositol acyltransferase 10 (Caenorhabditis elegans).